Consider the following 470-residue polypeptide: Dendritic cell-specific transmembrane protein (470 aa).

Residues 1–34 are Cytoplasmic-facing; the sequence is MGIWTSGTDIFLSLWEIYVSPRSPGWMDFIQHLG. The helical transmembrane segment at 35–55 threads the bilayer; it reads VCCLVALISVGLLSVAACWFL. Topologically, residues 56–57 are extracellular; sequence PS. The chain crosses the membrane as a helical span at residues 58–78; it reads IIAAAASWIITCVLLCCSKHA. Residues 79–97 are Cytoplasmic-facing; that stretch reads RCFILLVFLSCGLREGRNA. The helical transmembrane segment at 98 to 118 threads the bilayer; it reads LIAAGTGIVILGHVENIFHNF. Residues 119-209 lie on the Extracellular side of the membrane; it reads KGLLDGMTCN…MATTTEVLSS (91 aa). The chain crosses the membrane as a helical span at residues 210–230; sequence LGQKLLAFAGLSLVLLGTGLF. The Cytoplasmic segment spans residues 231-292; sequence MKRFLGPCGW…FWPTPKERKN (62 aa). Residues 293–313 form a helical membrane-spanning segment; it reads LGLFFLPILIHLCIWVLFAAV. Topologically, residues 314–376 are extracellular; that stretch reads DYLLYRLIFS…PKPKFLLSET (63 aa). Residues 377 to 397 form a helical membrane-spanning segment; the sequence is WVPLSVILLILVMLGLLSSIL. At 398 to 470 the chain is on the cytoplasmic side; that stretch reads MQLKILVSAS…QMDMASADKS (73 aa).

In terms of assembly, monomer. Homodimer. Isoform 1 interacts (via the C-terminus cytoplasmic tail) with OS9 isoform 1 (via the C-terminus tail); the interaction induces DCSTAMP redistribution to the endoplasmic reticulum-Golgi intermediate compartment. Isoform 1 interacts (via the C-terminus cytoplasmic tail) with OS9 isoform 2 (via the C-terminus tail). Interacts with CREB3. Post-translationally, glycosylated. Preferentially expressed by dendritic cells (DCs). Detected in both immature and mature DCs. Highly expressed in lymph nodes, lung, kidney and liver. Expressed at lower levels in pancreas, bone marrow, spleen, leukocytes, in freshly isolated peripheral blood mononuclear cells (PBMC) and B-cells. Not expressed in freshly isolated monocytes.

The protein resides in the cell membrane. Its subcellular location is the endoplasmic reticulum membrane. It is found in the endoplasmic reticulum-Golgi intermediate compartment membrane. It localises to the endosome. Its function is as follows. Probable cell surface receptor that plays several roles in cellular fusion, cell differentiation, bone and immune homeostasis. Plays a role in TNFSF11-mediated osteoclastogenesis. Cooperates with OCSTAMP in modulating cell-cell fusion in both osteoclasts and foreign body giant cells (FBGCs). Participates in osteoclast bone resorption. Involved in inducing the expression of tartrate-resistant acid phosphatase in osteoclast precursors. Plays a role in haematopoietic stem cell differentiation of bone marrow cells toward the myeloid lineage. Inhibits the development of neutrophilic granulocytes. Plays also a role in the regulation of dendritic cell (DC) antigen presentation activity by controlling phagocytic activity. Involved in the maintenance of immune self-tolerance and avoidance of autoimmune reactions. This chain is Dendritic cell-specific transmembrane protein (DCSTAMP), found in Homo sapiens (Human).